A 149-amino-acid polypeptide reads, in one-letter code: Arginine repressor (149 aa).

This sequence belongs to the ArgR family.

It is found in the cytoplasm. Its pathway is amino-acid biosynthesis; L-arginine biosynthesis [regulation]. In terms of biological role, regulates arginine biosynthesis genes. The protein is Arginine repressor of Geobacillus sp. (strain WCH70).